Reading from the N-terminus, the 158-residue chain is Deoxyuridine 5'-triphosphate nucleotidohydrolase (158 aa).

Substrate contacts are provided by residues 75-77 (RSG), Asn88, 92-94 (TVD), and Lys102.

This sequence belongs to the dUTPase family. Mg(2+) serves as cofactor.

The catalysed reaction is dUTP + H2O = dUMP + diphosphate + H(+). It participates in pyrimidine metabolism; dUMP biosynthesis; dUMP from dCTP (dUTP route): step 2/2. In terms of biological role, this enzyme is involved in nucleotide metabolism: it produces dUMP, the immediate precursor of thymidine nucleotides and it decreases the intracellular concentration of dUTP so that uracil cannot be incorporated into DNA. This is Deoxyuridine 5'-triphosphate nucleotidohydrolase from Bifidobacterium longum subsp. infantis (strain ATCC 15697 / DSM 20088 / JCM 1222 / NCTC 11817 / S12).